Reading from the N-terminus, the 706-residue chain is Choline transporter-like protein 2 (706 aa).

Over 1–33 (MGGERQHYYGKHGTPQKYDPTFKGPIYHRGCTD) the chain is Cytoplasmic. Thr14 is subject to Phosphothreonine. The helical transmembrane segment at 34 to 54 (VICCVFLLLAIVGYVAVGIIA) threads the bilayer. Topologically, residues 55 to 232 (WTHGDPRKVI…RIFEDYTVSW (178 aa)) are extracellular. Residues Asn187 and Asn200 are each glycosylated (N-linked (GlcNAc...) asparagine). Residues 233–253 (YWIIIGLVIAMVLSLLFIILL) form a helical membrane-spanning segment. Residues 254-256 (RFL) are Cytoplasmic-facing. Residues 257-277 (AGIMVWVMIVMVILVLGYGIF) form a helical membrane-spanning segment. The Extracellular segment spans residues 278–315 (HCYMEYSRLRGEAGSDISLVDLGFQTDLRVYLHLRQTW). Residues 316–336 (MAFMIILSILEVIIILLLIFL) form a helical membrane-spanning segment. Over 337–364 (RKRILIAIALIKEASRAVGYVMCSMLYP) the chain is Cytoplasmic. Residues 365–385 (LVTFLLLCLCIAYWASTAIFL) traverse the membrane as a helical segment. Topologically, residues 386–440 (STSNEAVYKIFSDTDCQAVGKTCNPENFSSSSEFHLCPGAHCQFAFYGGESTYHR) are extracellular. A helical transmembrane segment spans residues 441 to 461 (ALLGLQIFNAFMFFWLANFVL). Residues 462–504 (ALGQVTLAGAFASYYWALKKPDDLPAFPLFSAFGRALRYHTGS) lie on the Cytoplasmic side of the membrane. A helical transmembrane segment spans residues 505–525 (LAFGSLLLAIVQIIRVMLEYL). Over 526 to 563 (DQRLKAAENKFAKFLMTCLKCCFWCLEKFIKFLNRNAY) the chain is Extracellular. The chain crosses the membrane as a helical span at residues 564 to 584 (IMIAIYGTNFCTSARNAFFLL). At 585-599 (MRNIIRVAVLDKVTD) the chain is on the cytoplasmic side. The chain crosses the membrane as a helical span at residues 600 to 620 (FLFLLGKLLIVGSVGILAFFF). The Extracellular portion of the chain corresponds to 621–638 (FTHRIRIVQDTAPPLNYY). The helical transmembrane segment at 639–659 (WVPILTVIVGSYLIAHGFFSV) threads the bilayer. The Cytoplasmic portion of the chain corresponds to 660–706 (YGMCVDTLFLCFLEDLERNDGSMERPYFMSPTLKRLLNKTNRKPAES).

It belongs to the CTL (choline transporter-like) family. As to quaternary structure, interacts with COCH. In terms of processing, N-glycosylated.

It localises to the cell membrane. It is found in the mitochondrion outer membrane. It catalyses the reaction choline(out) + n H(+)(in) = choline(in) + n H(+)(out). The catalysed reaction is ethanolamine(out) + n H(+)(in) = ethanolamine(in) + n H(+)(out). Functionally, choline/H+ antiporter, mainly in mitochodria. Also acts as a low-affinity ethanolamine/H+ antiporter, regulating the supply of extracellular ethanolamine (Etn) for the CDP-Etn pathway, redistribute intracellular Etn and balance the CDP-Cho and CDP-Etn arms of the Kennedy pathway. The chain is Choline transporter-like protein 2 (SLC44A2) from Sus scrofa (Pig).